Consider the following 793-residue polypeptide: Ent-copalyl diphosphate synthase, chloroplastic (793 aa).

A chloroplast-targeting transit peptide spans 1 to 47; that stretch reads MPLASNPVAFLPSSTAHGDLPAAAFSRSSAGCLQLCRPLTPTSSLQC. Mg(2+) is bound by residues aspartate 372 and aspartate 374. Residues 372–375 carry the DXDD motif motif; the sequence is DIDD.

Belongs to the terpene synthase family. Requires Mg(2+) as cofactor.

Its subcellular location is the plastid. It localises to the chloroplast. It carries out the reaction (2E,6E,10E)-geranylgeranyl diphosphate = ent-copalyl diphosphate. It functions in the pathway plant hormone biosynthesis; gibberellin biosynthesis. Functionally, catalyzes the conversion of geranylgeranyl diphosphate (GGPP) to the gibberellin precursor ent-copalyl diphosphate (CPP). This is Ent-copalyl diphosphate synthase, chloroplastic from Salvia miltiorrhiza (Chinese sage).